A 323-amino-acid polypeptide reads, in one-letter code: Aldo-keto reductase family 1 member C1 (323 aa).

NADP(+) is bound by residues 20-24 and Asp50; that span reads GFGTY. Tyr24 contributes to the substrate binding site. The active-site Proton donor is the Tyr55. Residue His117 coordinates substrate. NADP(+) is bound by residues 166 to 167, Gln190, and 216 to 222; these read SN and YSALGSH. Substrate contacts are provided by His222 and Trp227. 270-280 contacts NADP(+); the sequence is KSYNEQRIRQN.

This sequence belongs to the aldo/keto reductase family. Monomer.

It localises to the cytoplasm. Its subcellular location is the cytosol. The catalysed reaction is a 3alpha-hydroxysteroid + NADP(+) = a 3-oxosteroid + NADPH + H(+). It carries out the reaction a 3alpha-hydroxysteroid + NAD(+) = a 3-oxosteroid + NADH + H(+). The enzyme catalyses (17R,20S)-17,20-dihydroxypregn-4-en-3-one + NADP(+) = 17alpha-hydroxyprogesterone + NADPH + H(+). It catalyses the reaction (17R,20S)-17,20-dihydroxypregn-4-en-3-one + NAD(+) = 17alpha-hydroxyprogesterone + NADH + H(+). The catalysed reaction is (20S)-hydroxypregn-4-en-3-one + NADP(+) = progesterone + NADPH + H(+). It carries out the reaction (20S)-hydroxypregn-4-en-3-one + NAD(+) = progesterone + NADH + H(+). The enzyme catalyses (1R,2R)-1,2-dihydrobenzene-1,2-diol + NADP(+) = catechol + NADPH + H(+). It catalyses the reaction (S)-indan-1-ol + NAD(+) = indan-1-one + NADH + H(+). The catalysed reaction is (S)-indan-1-ol + NADP(+) = indan-1-one + NADPH + H(+). It carries out the reaction 5alpha-androstane-3alpha,17beta-diol + NADP(+) = 17beta-hydroxy-5alpha-androstan-3-one + NADPH + H(+). The enzyme catalyses 5alpha-androstane-3beta,17beta-diol + NADP(+) = 17beta-hydroxy-5alpha-androstan-3-one + NADPH + H(+). It catalyses the reaction 5alpha-androstane-3alpha,17beta-diol + NAD(+) = 17beta-hydroxy-5alpha-androstan-3-one + NADH + H(+). The catalysed reaction is 17beta-hydroxy-5alpha-androstan-3-one + NADP(+) = 5alpha-androstan-3,17-dione + NADPH + H(+). It carries out the reaction androsterone + NADP(+) = 5alpha-androstan-3,17-dione + NADPH + H(+). The enzyme catalyses androsterone + NADPH + H(+) = 5alpha-androstane-3alpha,17beta-diol + NADP(+). It catalyses the reaction 5alpha-androstane-3alpha,17beta-diol + NAD(+) = androsterone + NADH + H(+). The catalysed reaction is 17beta-estradiol + NADP(+) = estrone + NADPH + H(+). It carries out the reaction 17beta-estradiol + NAD(+) = estrone + NADH + H(+). The enzyme catalyses testosterone + NADP(+) = androst-4-ene-3,17-dione + NADPH + H(+). It catalyses the reaction 20alpha-hydroxy-5beta-pregnan-3-one + NADP(+) = 5beta-pregnan-3,20-dione + NADPH + H(+). The catalysed reaction is 3beta-hydroxy-5beta-pregnane-20-one + NADP(+) = 5beta-pregnan-3,20-dione + NADPH + H(+). It carries out the reaction 3beta-hydroxy-5beta-pregnane-20-one + NADPH + H(+) = 3beta,20alpha-dihydroxy-5beta-pregnane + NADP(+). The enzyme catalyses (3beta,5alpha,17beta)-3-hydroxyandrostan-17-yl sulfate + NADP(+) = 5alpha-dihydrotestosterone sulfate + NADPH + H(+). The protein operates within steroid metabolism. Cytosolic aldo-keto reductase that catalyzes the NADH and NADPH-dependent reduction of ketosteroids to hydroxysteroids. Most probably acts as a reductase in vivo since the oxidase activity measured in vitro is inhibited by physiological concentrations of NADPH. Displays a broad positional specificity acting on positions 3, 17 and 20 of steroids and regulates the metabolism of hormones like estrogens and androgens. May also reduce conjugated steroids such as 5alpha-dihydrotestosterone sulfate. Displays affinity for bile acids. The protein is Aldo-keto reductase family 1 member C1 (AKR1C1) of Pongo abelii (Sumatran orangutan).